Consider the following 147-residue polypeptide: Cyanate hydratase (147 aa).

Residues arginine 88, glutamate 91, and serine 114 contribute to the active site.

This sequence belongs to the cyanase family.

The enzyme catalyses cyanate + hydrogencarbonate + 3 H(+) = NH4(+) + 2 CO2. Functionally, catalyzes the reaction of cyanate with bicarbonate to produce ammonia and carbon dioxide. This is Cyanate hydratase from Prochlorococcus marinus subsp. pastoris (strain CCMP1986 / NIES-2087 / MED4).